Here is an 83-residue protein sequence, read N- to C-terminus: Cytochrome b559 subunit alpha (83 aa).

A helical membrane pass occupies residues 21–35 (VIHSITIPSLFVAGW). H23 lines the heme pocket.

Belongs to the PsbE/PsbF family. Heterodimer of an alpha subunit and a beta subunit. PSII is composed of 1 copy each of membrane proteins PsbA, PsbB, PsbC, PsbD, PsbE, PsbF, PsbH, PsbI, PsbJ, PsbK, PsbL, PsbM, PsbT, PsbX, PsbY, PsbZ, Psb30/Ycf12, at least 3 peripheral proteins of the oxygen-evolving complex and a large number of cofactors. It forms dimeric complexes. Heme b is required as a cofactor.

It is found in the plastid. It localises to the chloroplast thylakoid membrane. Its function is as follows. This b-type cytochrome is tightly associated with the reaction center of photosystem II (PSII). PSII is a light-driven water:plastoquinone oxidoreductase that uses light energy to abstract electrons from H(2)O, generating O(2) and a proton gradient subsequently used for ATP formation. It consists of a core antenna complex that captures photons, and an electron transfer chain that converts photonic excitation into a charge separation. The chain is Cytochrome b559 subunit alpha from Nephroselmis olivacea (Green alga).